The following is a 421-amino-acid chain: tRNA(Ile)-lysidine synthase (421 aa).

26–31 (SGGADS) contacts ATP.

The protein belongs to the tRNA(Ile)-lysidine synthase family.

It localises to the cytoplasm. The catalysed reaction is cytidine(34) in tRNA(Ile2) + L-lysine + ATP = lysidine(34) in tRNA(Ile2) + AMP + diphosphate + H(+). In terms of biological role, ligates lysine onto the cytidine present at position 34 of the AUA codon-specific tRNA(Ile) that contains the anticodon CAU, in an ATP-dependent manner. Cytidine is converted to lysidine, thus changing the amino acid specificity of the tRNA from methionine to isoleucine. The protein is tRNA(Ile)-lysidine synthase of Streptococcus thermophilus (strain CNRZ 1066).